Reading from the N-terminus, the 321-residue chain is MAEKGMDLNRFILEEERKHPSASGSLSLALMAIESAAKIIASHVRMAGLADVLGQAGKVNVQGEEVQKLDELSNTVMLQHLLDSGQFYALASEELNEPVYSHKGKDARYVIAFDPLDGSSNIDVNVSIGTIFSIHRRIGDGIENFLQEGYKQVAAGYIIYGSSVMFVLTTGNGVNGFTYDPAVGMFLLSHPDIKIPEKGKIYSINEANAHKWTDEGLVRYIDKLKEEGYTSRYIGSMVADVHRTLIKGGMFGYPADRKNKSGKLRLLYEAAPMAYIIKQAGGKSTTGKMDILDVKPEDIHQRVPVFIGSRKEIDQLLEFIS.

Mg(2+) contacts are provided by E93, D114, L116, and D117. Substrate-binding positions include D117–S120, N205, Y233, and K263. E269 serves as a coordination point for Mg(2+).

This sequence belongs to the FBPase class 1 family. As to quaternary structure, homotetramer. The cofactor is Mg(2+).

Its subcellular location is the cytoplasm. The catalysed reaction is beta-D-fructose 1,6-bisphosphate + H2O = beta-D-fructose 6-phosphate + phosphate. It participates in carbohydrate biosynthesis; gluconeogenesis. This chain is Fructose-1,6-bisphosphatase class 1, found in Persephonella marina (strain DSM 14350 / EX-H1).